A 312-amino-acid polypeptide reads, in one-letter code: Malate dehydrogenase (312 aa).

Residues 7 to 13 and aspartate 34 contribute to the NAD(+) site; that span reads GAAGGIG. Residues arginine 81 and arginine 87 each coordinate substrate. NAD(+) is bound by residues asparagine 94 and 117-119; that span reads ITN. Residues asparagine 119 and arginine 153 each contribute to the substrate site. Histidine 177 serves as the catalytic Proton acceptor. Methionine 227 provides a ligand contact to NAD(+).

Belongs to the LDH/MDH superfamily. MDH type 1 family. In terms of assembly, homodimer.

The enzyme catalyses (S)-malate + NAD(+) = oxaloacetate + NADH + H(+). Catalyzes the reversible oxidation of malate to oxaloacetate. This Pectobacterium carotovorum subsp. carotovorum (strain PC1) protein is Malate dehydrogenase.